Here is a 350-residue protein sequence, read N- to C-terminus: Ion-translocating oxidoreductase complex subunit D (350 aa).

3 helical membrane-spanning segments follow: residues 20–39 (IMMLVTLATVPGIAVQWYFF), 89–109 (IPPLAPWWMVVLGTAFAVIIA), and 123–143 (PAMIGYVVLLISFPVQMTNWL). Threonine 187 carries the post-translational modification FMN phosphoryl threonine. Transmembrane regions (helical) follow at residues 215 to 235 (LAGLGWQWVNLAYLAGGLFLL), 244 to 264 (IPVSFLVTLAVCSTLGWLIAP), 267 to 287 (FLSPLMHLLSGATMLGAFFIL), 301 to 321 (LVFGALVGLLVWLIRSFGGYP), and 322 to 342 (DGVAFAVLLANITVPLIDYYT).

It belongs to the NqrB/RnfD family. As to quaternary structure, the complex is composed of six subunits: RnfA, RnfB, RnfC, RnfD, RnfE and RnfG. It depends on FMN as a cofactor.

It is found in the cell inner membrane. In terms of biological role, part of a membrane-bound complex that couples electron transfer with translocation of ions across the membrane. This is Ion-translocating oxidoreductase complex subunit D from Cronobacter sakazakii (strain ATCC BAA-894) (Enterobacter sakazakii).